The following is a 185-amino-acid chain: Elongation factor P (185 aa).

The protein belongs to the elongation factor P family.

It localises to the cytoplasm. The protein operates within protein biosynthesis; polypeptide chain elongation. Involved in peptide bond synthesis. Stimulates efficient translation and peptide-bond synthesis on native or reconstituted 70S ribosomes in vitro. Probably functions indirectly by altering the affinity of the ribosome for aminoacyl-tRNA, thus increasing their reactivity as acceptors for peptidyl transferase. The sequence is that of Elongation factor P from Thermoanaerobacter sp. (strain X514).